The chain runs to 197 residues: Large ribosomal subunit protein uL10 (197 aa).

The tract at residues 162–197 (READGETAETPAQETASDDSKSTKAEASDASTTENK) is disordered. The segment covering 179–188 (DDSKSTKAEA) has biased composition (basic and acidic residues).

Belongs to the universal ribosomal protein uL10 family. In terms of assembly, part of the ribosomal stalk of the 50S ribosomal subunit. The N-terminus interacts with L11 and the large rRNA to form the base of the stalk. The C-terminus forms an elongated spine to which L12 dimers bind in a sequential fashion forming a multimeric L10(L12)X complex.

Its function is as follows. Forms part of the ribosomal stalk, playing a central role in the interaction of the ribosome with GTP-bound translation factors. This Oenococcus oeni (strain ATCC BAA-331 / PSU-1) protein is Large ribosomal subunit protein uL10.